The following is a 395-amino-acid chain: Phosphopentomutase (395 aa).

Positions 16, 289, 294, 330, 331, and 342 each coordinate Mn(2+).

The protein belongs to the phosphopentomutase family. The cofactor is Mn(2+).

It is found in the cytoplasm. It carries out the reaction 2-deoxy-alpha-D-ribose 1-phosphate = 2-deoxy-D-ribose 5-phosphate. The catalysed reaction is alpha-D-ribose 1-phosphate = D-ribose 5-phosphate. It participates in carbohydrate degradation; 2-deoxy-D-ribose 1-phosphate degradation; D-glyceraldehyde 3-phosphate and acetaldehyde from 2-deoxy-alpha-D-ribose 1-phosphate: step 1/2. Isomerase that catalyzes the conversion of deoxy-ribose 1-phosphate (dRib-1-P) and ribose 1-phosphate (Rib-1-P) to deoxy-ribose 5-phosphate (dRib-5-P) and ribose 5-phosphate (Rib-5-P), respectively. The chain is Phosphopentomutase from Geobacillus kaustophilus (strain HTA426).